Here is a 1027-residue protein sequence, read N- to C-terminus: Circadian locomoter output cycles protein kaput (1027 aa).

The bHLH domain occupies 15 to 65; the sequence is LCRKSRNLSEKKRRDQFNSLVNDLSALISTSSRKMDKSTVLKSTIAFLKNH. PAS domains lie at 88 to 160 and 255 to 321; these read NDEY…VIEP and REMS…ELRQ. 5 disordered regions span residues 377 to 402, 443 to 575, 765 to 800, 869 to 911, and 926 to 1027; these read RKEGQKSGNSNSITNNGSSKVIASTG, TSPA…QQLQ, QQMMMQQQQNLHTQHQHNLQQQHQSHSQLQQHTQQQ, TINP…NNED, and SINF…GSSQ. Positions 383 to 402 are enriched in low complexity; that stretch reads SGNSNSITNNGSSKVIASTG. Residues 443 to 486 are compositionally biased toward polar residues; sequence TSPAVDSSPMWSASAVQPSGSCQINPLKTSRPASSYGNISSTGI. 2 stretches are compositionally biased toward low complexity: residues 504-516 and 552-575; these read SDSTSMSTDSVTS and QQQQQHQNQQQQHQQHQQLQQQLQ. An implicated in the circadian rhythmicity region spans residues 780 to 1027; that stretch reads QHNLQQQHQS…SPHTAPGSSQ (248 aa). 2 stretches are compositionally biased toward low complexity: residues 871–909 and 951–995; these read NPFNSSSNNNNQSYNGGSNLNNGNQNNNNRSSNPPQNNN and SGSN…NQNQ. Residues 1006 to 1027 are compositionally biased toward polar residues; that stretch reads QMSQEQSQNLFNSPHTAPGSSQ.

Efficient DNA binding requires dimerization with another bHLH protein. Forms a heterodimer with Cycle. Widely expressed. Found in head, body, and appendage fractions.

The protein localises to the nucleus. Circadian regulator that acts as a transcription factor and generates a rhythmic output with a period of about 24 hours. Oscillates in antiphase to the cycling observed for period (PER) and timeless (TIM). According to PubMed:9742131, reaches peak abundance within several hours of the dark-light transition at ZT0 (zeitgeber 0), whereas PubMed:9616122 describes bimodal oscillating expression with maximum at ZT5 and ZT23. Clock-cycle heterodimers activate cycling transcription of PER and TIM by binding to the E-box (5'-CACGTG-3') present in their promoters. Once induced, Period and Timeless block Clock's ability to transactivate their promoters. The protein is Circadian locomoter output cycles protein kaput (Clk) of Drosophila melanogaster (Fruit fly).